Consider the following 240-residue polypeptide: Phosphoribosylaminoimidazole-succinocarboxamide synthase (240 aa).

This sequence belongs to the SAICAR synthetase family.

It catalyses the reaction 5-amino-1-(5-phospho-D-ribosyl)imidazole-4-carboxylate + L-aspartate + ATP = (2S)-2-[5-amino-1-(5-phospho-beta-D-ribosyl)imidazole-4-carboxamido]succinate + ADP + phosphate + 2 H(+). It participates in purine metabolism; IMP biosynthesis via de novo pathway; 5-amino-1-(5-phospho-D-ribosyl)imidazole-4-carboxamide from 5-amino-1-(5-phospho-D-ribosyl)imidazole-4-carboxylate: step 1/2. The polypeptide is Phosphoribosylaminoimidazole-succinocarboxamide synthase (Anoxybacillus flavithermus (strain DSM 21510 / WK1)).